A 354-amino-acid chain; its full sequence is Histidinol-phosphate aminotransferase (354 aa).

Lys-210 carries the post-translational modification N6-(pyridoxal phosphate)lysine.

The protein belongs to the class-II pyridoxal-phosphate-dependent aminotransferase family. Histidinol-phosphate aminotransferase subfamily. As to quaternary structure, homodimer. Pyridoxal 5'-phosphate is required as a cofactor.

The enzyme catalyses L-histidinol phosphate + 2-oxoglutarate = 3-(imidazol-4-yl)-2-oxopropyl phosphate + L-glutamate. It participates in amino-acid biosynthesis; L-histidine biosynthesis; L-histidine from 5-phospho-alpha-D-ribose 1-diphosphate: step 7/9. This is Histidinol-phosphate aminotransferase from Clostridium botulinum (strain Kyoto / Type A2).